The following is a 474-amino-acid chain: tRNA-2-methylthio-N(6)-dimethylallyladenosine synthase (474 aa).

The MTTase N-terminal domain occupies 3–120; that stretch reads KKLHIKTWGC…LPEMINSVRG (118 aa). 6 residues coordinate [4Fe-4S] cluster: Cys12, Cys49, Cys83, Cys157, Cys161, and Cys164. The 233-residue stretch at 143 to 375 folds into the Radical SAM core domain; it reads RAEGPTAFVS…QERINQQAMA (233 aa). One can recognise a TRAM domain in the interval 378–441; that stretch reads RRMLGTTQRI…PNSLRGKVVR (64 aa).

This sequence belongs to the methylthiotransferase family. MiaB subfamily. As to quaternary structure, monomer. It depends on [4Fe-4S] cluster as a cofactor.

Its subcellular location is the cytoplasm. The catalysed reaction is N(6)-dimethylallyladenosine(37) in tRNA + (sulfur carrier)-SH + AH2 + 2 S-adenosyl-L-methionine = 2-methylsulfanyl-N(6)-dimethylallyladenosine(37) in tRNA + (sulfur carrier)-H + 5'-deoxyadenosine + L-methionine + A + S-adenosyl-L-homocysteine + 2 H(+). Catalyzes the methylthiolation of N6-(dimethylallyl)adenosine (i(6)A), leading to the formation of 2-methylthio-N6-(dimethylallyl)adenosine (ms(2)i(6)A) at position 37 in tRNAs that read codons beginning with uridine. The protein is tRNA-2-methylthio-N(6)-dimethylallyladenosine synthase of Escherichia coli (strain UTI89 / UPEC).